A 199-amino-acid chain; its full sequence is Charged multivesicular body protein 1b (199 aa).

Coiled-coil stretches lie at residues 10 to 48 (NLKF…MEVA) and 178 to 199 (TSVA…RDQV). A disordered region spans residues 167–199 (ELPQGQTGSVGTSVASAEQDELSQRLARLRDQV). The segment covering 170 to 182 (QGQTGSVGTSVAS) has biased composition (polar residues). An MIT-interacting motif motif is present at residues 186–196 (DELSQRLARLR).

It belongs to the SNF7 family. Probable peripherally associated component of the endosomal sorting required for transport complex III (ESCRT-III).

The protein resides in the cytoplasm. Its subcellular location is the cytosol. The protein localises to the endosome. It localises to the late endosome membrane. In terms of biological role, probable peripherally associated component of the endosomal sorting required for transport complex III (ESCRT-III) which is involved in multivesicular bodies (MVBs) formation and sorting of endosomal cargo proteins into MVBs. MVBs contain intraluminal vesicles (ILVs) that are generated by invagination and scission from the limiting membrane of the endosome and mostly are delivered to lysosomes enabling degradation of membrane proteins, such as stimulated growth factor receptors, lysosomal enzymes and lipids. This chain is Charged multivesicular body protein 1b (CHMP1B), found in Gallus gallus (Chicken).